We begin with the raw amino-acid sequence, 195 residues long: PRELI domain containing protein 3B (195 aa).

Residues 1–172 (MKIWTSEHVF…VIHKLNAEIE (172 aa)) enclose the PRELI/MSF1 domain. Residues Ser-46 and Ser-51 each carry the phosphoserine modification.

It belongs to the slowmo family.

This chain is PRELI domain containing protein 3B (Prelid3b), found in Mus musculus (Mouse).